Consider the following 540-residue polypeptide: uncharacterized protein (540 aa).

Residues 1-20 (MSVSYRGPRWSSFVHVSQHS) form the signal peptide.

This sequence belongs to the TP096X family.

This is an uncharacterized protein from Treponema pallidum (strain Nichols).